The primary structure comprises 830 residues: BLOC-2 complex member HPS5 homolog (830 aa).

WD repeat units lie at residues arginine 25–isoleucine 64, serine 67–glycine 106, and glycine 114–isoleucine 153. The stretch at aspartate 578–lysine 604 forms a coiled coil.

This sequence belongs to the HPS5 family.

Functionally, has a role in the biogenesis of eye pigment granules. Eye pigment granules are specialized forms of late endosomes or lysosomes. Biogenesis of pigment granules in the eye requires molecular components required for protein delivery to lysosomes. The sequence is that of BLOC-2 complex member HPS5 homolog from Anopheles gambiae (African malaria mosquito).